The following is a 243-amino-acid chain: Endochitinase (243 aa).

3 cysteine pairs are disulfide-bonded: C23–C85, C97–C105, and C223–C236. E67 (proton donor) is an active-site residue.

Its subcellular location is the vacuole. The catalysed reaction is Random endo-hydrolysis of N-acetyl-beta-D-glucosaminide (1-&gt;4)-beta-linkages in chitin and chitodextrins.. Functionally, defense against chitin-containing fungal pathogens. Shows activity on chitin, tetra-N-acetylglucosamine and chitosan. This is Endochitinase from Carica papaya (Papaya).